The following is a 422-amino-acid chain: BTB/POZ domain-containing protein KCTD18 (422 aa).

The 69-residue stretch at 12 to 80 folds into the BTB domain; sequence DILRLNVGGC…YLHGEVHIPT (69 aa). Disordered regions lie at residues 289–357 and 376–422; these read VKNS…THLP and LRRT…DQTK. The segment covering 396–406 has biased composition (pro residues); it reads PAGPPEPPPDA. Over residues 413-422 the composition is skewed to polar residues; the sequence is WTENGQDQTK.

The sequence is that of BTB/POZ domain-containing protein KCTD18 (KCTD18) from Bos taurus (Bovine).